Here is a 375-residue protein sequence, read N- to C-terminus: MSCPVIELTQQLIRRPSLSPDDAGCQALLIDRLQAIGFTVERMDFADTQNFWAWRGQGETLAFAGHTDVVPPGDADRWINPPFEPTIRDGMLFGRGAADMKGSLAAMVVAAERFVAQHPNHTGRLAFLITSDEEASAHNGTVKVVEALMARNERLDYCLVGEPSSIEVVGDVVKNGRRGSLTCNLTIHGVQGHVAYPHLADNPVHRAAPFLNELVAIEWDQGNEFFPATSMQIANIQAGTGSNNVIPGELFVQFNFRFSTELTDEMIKAQVLALLEKHQLRYTVDWWLSGQPFLTARGKLVDAVVNAVEHYNEIKPQLLTTGGTSDGRFIARMGAQVVELGPVNATIHKINECVNAADLQLLARMYQRIMEQLVA.

His66 serves as a coordination point for Zn(2+). Asp68 is a catalytic residue. Asp99 contributes to the Zn(2+) binding site. Residue Glu133 is the Proton acceptor of the active site. Residues Glu134, Glu162, and His348 each contribute to the Zn(2+) site.

This sequence belongs to the peptidase M20A family. DapE subfamily. As to quaternary structure, homodimer. Zn(2+) is required as a cofactor. Requires Co(2+) as cofactor.

It catalyses the reaction N-succinyl-(2S,6S)-2,6-diaminopimelate + H2O = (2S,6S)-2,6-diaminopimelate + succinate. Its pathway is amino-acid biosynthesis; L-lysine biosynthesis via DAP pathway; LL-2,6-diaminopimelate from (S)-tetrahydrodipicolinate (succinylase route): step 3/3. Its function is as follows. Catalyzes the hydrolysis of N-succinyl-L,L-diaminopimelic acid (SDAP), forming succinate and LL-2,6-diaminopimelate (DAP), an intermediate involved in the bacterial biosynthesis of lysine and meso-diaminopimelic acid, an essential component of bacterial cell walls. This chain is Succinyl-diaminopimelate desuccinylase, found in Shigella sonnei (strain Ss046).